Consider the following 418-residue polypeptide: Ankyrin repeat domain-containing protein 61 (418 aa).

8 ANK repeats span residues 27–57 (ALHS…NQPI), 75–104 (ESII…DPEV), 132–161 (NRTH…QVNT), 167–196 (NKRS…DVNA), 200–229 (ASMT…NVNC), 234–273 (TGNT…KVNA), 277–306 (KGQT…NVNI), and 310–343 (NGES…PLRM).

The protein is Ankyrin repeat domain-containing protein 61 (ANKRD61) of Homo sapiens (Human).